The primary structure comprises 179 residues: Interleukin-22 (179 aa).

The signal sequence occupies residues M1–A33. 2 disulfide bridges follow: C40–C132 and C89–C178. 3 N-linked (GlcNAc...) asparagine glycosylation sites follow: N54, N68, and N97.

It belongs to the IL-10 family.

The protein localises to the secreted. Functionally, cytokine that plays a critical role in modulating tissue responses during inflammation. Plays an essential role in the regeneration of epithelial cells to maintain barrier function after injury and for the prevention of further tissue damage. Unlike most of the cytokines, has no effect on immune cells. Signals through a heterodimeric receptor composed of two subunits, the specific receptor IL22RA1 which is present on non-immune cells in many organs and the shared subunit IL10RB. Ligation of IL22RA1 with IL22 induces activation of the tyrosine kinases JAK1 and TYK2, which in turn activates STAT3. In turn, promotes cell survival and proliferation through STAT3, ERK1/2 and PI3K/AKT pathways. Promotes phosphorylation of GSK3B at 'Ser-9' and CTTN. Promotes epithelial cell spreading. The protein is Interleukin-22 (Il22) of Mus musculus (Mouse).